A 307-amino-acid chain; its full sequence is ATP synthase gamma chain (307 aa).

The protein belongs to the ATPase gamma chain family. F-type ATPases have 2 components, CF(1) - the catalytic core - and CF(0) - the membrane proton channel. CF(1) has five subunits: alpha(3), beta(3), gamma(1), delta(1), epsilon(1). CF(0) has three main subunits: a, b and c.

The protein localises to the cell membrane. Produces ATP from ADP in the presence of a proton gradient across the membrane. The gamma chain is believed to be important in regulating ATPase activity and the flow of protons through the CF(0) complex. This chain is ATP synthase gamma chain, found in Bifidobacterium longum (strain DJO10A).